The sequence spans 305 residues: Coenzyme PQQ synthesis protein B (305 aa).

This sequence belongs to the PqqB family.

It functions in the pathway cofactor biosynthesis; pyrroloquinoline quinone biosynthesis. May be involved in the transport of PQQ or its precursor to the periplasm. This is Coenzyme PQQ synthesis protein B from Methylobacillus flagellatus.